The following is a 292-amino-acid chain: NAD-dependent protein deacetylase sir-2.4 (292 aa).

A Deacetylase sirtuin-type domain is found at 31 to 292 (IEKLRTLYNH…DEVPIPLKIS (262 aa)). NAD(+) contacts are provided by residues 56-75 (GAGV…QGVW) and 116-119 (QNVD). His136 functions as the Proton acceptor in the catalytic mechanism. The Zn(2+) site is built by Cys144, Cys147, Cys163, and Cys169. NAD(+) is bound by residues 216–218 (GTS), 242–244 (NYQ), and Val260.

Belongs to the sirtuin family. Class IV subfamily. Requires Zn(2+) as cofactor.

It carries out the reaction N(6)-acetyl-L-lysyl-[protein] + NAD(+) + H2O = 2''-O-acetyl-ADP-D-ribose + nicotinamide + L-lysyl-[protein]. Its function is as follows. NAD-dependent protein deacetylase. The polypeptide is NAD-dependent protein deacetylase sir-2.4 (sir-2.4) (Caenorhabditis elegans).